Reading from the N-terminus, the 447-residue chain is Alkylglycerol monooxygenase (447 aa).

A run of 2 helical transmembrane segments spans residues 43 to 63 (ATPF…ILKG) and 111 to 131 (WDST…YYWF). The Fatty acid hydroxylase domain occupies 119–249 (FTFLGVDFGY…LIIWDRIFGT (131 aa)). Residues 132–136 (HRMAH) carry the Histidine box-1 motif. The short motif at 145–149 (HQAHH) is the Histidine box-2 element. A helical membrane pass occupies residues 170–190 (SWVFYCPLALFIPPSVFAVHI). The Histidine box-3 signature appears at 221–225 (HRVHH). The next 3 membrane-spanning stretches (helical) occupy residues 340-360 (VLQF…TAVL), 363-383 (VTLL…GFLL), and 413-433 (IPSL…FWGV).

Belongs to the sterol desaturase family. TMEM195 subfamily. Requires Fe cation as cofactor. As to expression, highly expressed in lever and small intestine.

The protein localises to the endoplasmic reticulum membrane. It catalyses the reaction 1-O-(1,2-saturated-alkyl)-sn-glycerol + (6R)-L-erythro-5,6,7,8-tetrahydrobiopterin + O2 = a 1-(1-hydroxyalkyl)-sn-glycerol + (6R)-L-erythro-6,7-dihydrobiopterin + H2O. In terms of biological role, glyceryl-ether monooxygenase that cleaves the O-alkyl bond of ether lipids. Ether lipids are essential components of brain membranes. This is Alkylglycerol monooxygenase (Agmo) from Mus musculus (Mouse).